A 200-amino-acid chain; its full sequence is Large ribosomal subunit protein uL4 (200 aa).

Residues 43–72 (RAQKTRAEVSGSGKKPWRQKGTGRARSGDI) are disordered.

The protein belongs to the universal ribosomal protein uL4 family. As to quaternary structure, part of the 50S ribosomal subunit.

Its function is as follows. One of the primary rRNA binding proteins, this protein initially binds near the 5'-end of the 23S rRNA. It is important during the early stages of 50S assembly. It makes multiple contacts with different domains of the 23S rRNA in the assembled 50S subunit and ribosome. Forms part of the polypeptide exit tunnel. This is Large ribosomal subunit protein uL4 from Haemophilus ducreyi (strain 35000HP / ATCC 700724).